Here is a 152-residue protein sequence, read N- to C-terminus: Acidic phospholipase A2 1 (152 aa).

Positions 1 to 19 (MNPAYFLVLAAVCVSLLGA) are cleaved as a signal peptide. Positions 20–27 (ANIPPQPL) are excised as a propeptide. 7 disulfides stabilise this stretch: C38–C104, C54–C151, C56–C72, C71–C132, C78–C125, C88–C118, and C111–C123. Ca(2+) contacts are provided by Y55, G57, and G59. Residue H75 is part of the active site. Ca(2+) is bound at residue D76. D126 is a catalytic residue.

Belongs to the phospholipase A2 family. Group I subfamily. D49 sub-subfamily. The cofactor is Ca(2+). As to expression, expressed by the venom gland.

It is found in the secreted. The catalysed reaction is a 1,2-diacyl-sn-glycero-3-phosphocholine + H2O = a 1-acyl-sn-glycero-3-phosphocholine + a fatty acid + H(+). PLA2 catalyzes the calcium-dependent hydrolysis of the 2-acyl groups in 3-sn-phosphoglycerides. The chain is Acidic phospholipase A2 1 from Bungarus candidus (Malayan krait).